Here is a 595-residue protein sequence, read N- to C-terminus: Probable translation initiation factor IF-2 (595 aa).

The tr-type G domain occupies 11–225; that stretch reads LRTPIVAVLG…ILVGLAQRYL (215 aa). A G1 region spans residues 20–27; that stretch reads GHVDHGKT. Residue 20–27 coordinates GTP; the sequence is GHVDHGKT. The tract at residues 45-49 is G2; sequence GITQH. Residues 81–84 are G3; sequence DTPG. Residues 81 to 85 and 135 to 138 each bind GTP; these read DTPGH and NKID. The interval 135–138 is G4; sequence NKID. Residues 203 to 205 are G5; sequence SAL.

This sequence belongs to the TRAFAC class translation factor GTPase superfamily. Classic translation factor GTPase family. IF-2 subfamily.

In terms of biological role, function in general translation initiation by promoting the binding of the formylmethionine-tRNA to ribosomes. Seems to function along with eIF-2. This is Probable translation initiation factor IF-2 (infB) from Archaeoglobus fulgidus (strain ATCC 49558 / DSM 4304 / JCM 9628 / NBRC 100126 / VC-16).